The primary structure comprises 768 residues: MINIEDISKSSNQSEEKQLKSTSSKPKYSFAAKSLFKGSNNITPYYLSTSNTFQCVASESIQTWLLSDDGHIFTSSGNFVLDVSSGGYFVELVQLNSNSKTQIWTIDTTNNKIQNQGNGNYLDIDCFNICVAPLNGNATQQWTTFRRAPIPTGNWGYFQSEQLGSNNYWGLSVLNNSTSYNTSVVMNKVQAKSKGQIWQMTSDGHILSRLDGNLVLDIGPSINGSTTNYYLNTNVYKANDLMQQWGINENNQIFNQYYPNLCIGFVGQLGVDSTVNCVLAQPSSACDTCFQWIANPTYSLNQIVSEVPEPFPAYTSGDLLASYQYLSNDATSNFTDDIRSLYTGINVSLQSFLSIVTNATCPSSIHSTEDFSNVQNQIKTELIYAIDVRLVFENYSGFYSKLFSQGSSNLTNLANLINVDMSSNQMVNANYTDAITSIFYSLISEIPVGGSIIANIGQSAVEFGELMSQSNYQGASTYQVELSQLYTHLNTNYENEMANAQSMKDTILQDWGMMSKTYALCFLPTNDPSSLNMNGLDFEKISDVASVAYEIAMIQMLLPTTYQIYFTSAGYWVPYSDGDFAYSDNSGTYIMATIKYSNSYPPKELTDKLWNNGVSKQEFFLSAYGWNLATSLTYYNTTNQYSNIFKLAFPTIKNFTGVPMQFVMTNDGDNLGNFTVKTHFAKFFSTYYSVGDLGHHYFDIAVTDINKNKVANFTVDIKLKALEGSYVSIKTGSLVVQPGYAVGNPICNQGSYSLMFSASILIPIYKSE.

Positions 1-22 (MINIEDISKSSNQSEEKQLKST) are disordered. Ricin B-type lectin domains are found at residues 25 to 145 (KPKY…WTTF) and 116 to 248 (QGNG…WGIN).

It belongs to the cup family.

The protein localises to the cytoplasm. It is found in the membrane. Its function is as follows. May play an important role in stabilizing and/or regulating the cell membrane during Ca(2+) stress or certain stages of development. This is Putative calcium up-regulated protein H (cupH) from Dictyostelium discoideum (Social amoeba).